The following is a 176-amino-acid chain: Prenylated Rab acceptor 1 (176 aa).

Methionine 1 bears the N-acetylmethionine mark. An SKL peroxisome targeting motif motif is present at residues serine 11–phenylalanine 13. Serine 18 carries the post-translational modification Phosphoserine. Helical transmembrane passes span leucine 84–isoleucine 104 and valine 129–isoleucine 149.

The protein belongs to the PRA1 family. In terms of assembly, interacts with YIP1 and the Rab GTPases SEC4, YPT1, YPT6, YPT10, YPT11, YPT31, YPT32 and YPT52.

The protein resides in the golgi apparatus membrane. The protein localises to the peroxisome membrane. This Saccharomyces cerevisiae (strain ATCC 204508 / S288c) (Baker's yeast) protein is Prenylated Rab acceptor 1 (YIP3).